The sequence spans 267 residues: Indole-3-glycerol phosphate synthase (267 aa).

The protein belongs to the TrpC family.

It carries out the reaction 1-(2-carboxyphenylamino)-1-deoxy-D-ribulose 5-phosphate + H(+) = (1S,2R)-1-C-(indol-3-yl)glycerol 3-phosphate + CO2 + H2O. Its pathway is amino-acid biosynthesis; L-tryptophan biosynthesis; L-tryptophan from chorismate: step 4/5. This chain is Indole-3-glycerol phosphate synthase, found in Ralstonia pickettii (strain 12J).